Here is a 509-residue protein sequence, read N- to C-terminus: MTIQKINRVLLSVYDKTGLITLAQELKDMGVELVSTGGTLRHLQTHGIPVYSVEEVTGFPEILSGRVKTLHPKIHGGILAKNRENEELSSLDIKTFDLVIVNLYPFEQVMQKAEATEEEVMENIDIGGPTMIRAAAKNWYRVGVCVDPTDYEVLTQQLKQYHGLTDEFRKTLARKAFKHTAQYDKAIFNYFESVDTNKDDETELKFPEFNLLESRELPYGENPHQKASLLMESQKFIQHQGKGLSYNNFQDIDAAIKLVHEFQKPAVVAVKHTNPCGVGVSNTIEEAYDKAYQGDPVSIFGGIVACNRPVTEELASKLTEIFLDVIIAPEFEPRALEKLKSKSGTKVVEMDLEKMVGNKVEIKSTTFGYLCQEADYHHPHPQNWDRVAGEQAKPEEIDDLIIAEKIVKHVKSNAIVVVKEGQSLGIGAGQMNRVGASRIALENAGKESQNSVLASDAFFPFNDVVKLCSQYGVSAIVQPGGSKRDQDSIDLAQETGITMYFTGIRHFKH.

Residues 1–146 form the MGS-like domain; sequence MTIQKINRVL…KNWYRVGVCV (146 aa).

It belongs to the PurH family.

The enzyme catalyses (6R)-10-formyltetrahydrofolate + 5-amino-1-(5-phospho-beta-D-ribosyl)imidazole-4-carboxamide = 5-formamido-1-(5-phospho-D-ribosyl)imidazole-4-carboxamide + (6S)-5,6,7,8-tetrahydrofolate. The catalysed reaction is IMP + H2O = 5-formamido-1-(5-phospho-D-ribosyl)imidazole-4-carboxamide. The protein operates within purine metabolism; IMP biosynthesis via de novo pathway; 5-formamido-1-(5-phospho-D-ribosyl)imidazole-4-carboxamide from 5-amino-1-(5-phospho-D-ribosyl)imidazole-4-carboxamide (10-formyl THF route): step 1/1. It functions in the pathway purine metabolism; IMP biosynthesis via de novo pathway; IMP from 5-formamido-1-(5-phospho-D-ribosyl)imidazole-4-carboxamide: step 1/1. In Natranaerobius thermophilus (strain ATCC BAA-1301 / DSM 18059 / JW/NM-WN-LF), this protein is Bifunctional purine biosynthesis protein PurH.